A 245-amino-acid chain; its full sequence is 1-(5-phosphoribosyl)-5-[(5-phosphoribosylamino)methylideneamino] imidazole-4-carboxamide isomerase (245 aa).

Asp7 functions as the Proton acceptor in the catalytic mechanism. The active-site Proton donor is Asp129.

Belongs to the HisA/HisF family.

It localises to the cytoplasm. The catalysed reaction is 1-(5-phospho-beta-D-ribosyl)-5-[(5-phospho-beta-D-ribosylamino)methylideneamino]imidazole-4-carboxamide = 5-[(5-phospho-1-deoxy-D-ribulos-1-ylimino)methylamino]-1-(5-phospho-beta-D-ribosyl)imidazole-4-carboxamide. The protein operates within amino-acid biosynthesis; L-histidine biosynthesis; L-histidine from 5-phospho-alpha-D-ribose 1-diphosphate: step 4/9. The chain is 1-(5-phosphoribosyl)-5-[(5-phosphoribosylamino)methylideneamino] imidazole-4-carboxamide isomerase from Escherichia coli O127:H6 (strain E2348/69 / EPEC).